Here is a 273-residue protein sequence, read N- to C-terminus: Zinc finger protein AZF2 (273 aa).

The interval 33-64 is disordered; the sequence is LKRKRSKRQRSHSPSSSSSSPPRSRPKSQNQD. Residues 34–43 are compositionally biased toward basic residues; the sequence is KRKRSKRQRS. The segment covering 44 to 54 has biased composition (low complexity); it reads HSPSSSSSSPP. 2 consecutive C2H2-type zinc fingers follow at residues 106–128 and 165–187; these read YKCN…KASH and HECS…KRCH. The disordered stretch occupies residues 195–215; the sequence is GGGGGSKSISHSGSVSSTVSE. The span at 201-213 shows a compositional bias: low complexity; that stretch reads KSISHSGSVSSTV.

In terms of tissue distribution, expressed in roots, radicles, cotyledons, hypocotyls, leaf veins, stems, sepals, petals, stamens, placenta, funiculi and maturated seeds.

Its subcellular location is the nucleus. In terms of biological role, transcriptional repressor involved in the inhibition of plant growth under abiotic stress conditions. Can repress the expression of various genes, including osmotic stress and abscisic acid-repressive genes and auxin-inducible genes, by binding to their promoter regions in a DNA sequence-specific manner. Acts as a negative regulator of abscisic acid (ABA) signaling during seed germination. Probably involved in jasmonate (JA) early signaling response. May regulate the expression of the JA biosynthesis gene LOX3 and control the expression of TIFY10A/JAZ1, a key repressor in the JA signaling cascade. May act as a positive regulator of leaf senescence. Has been identified as a suppressor of the deficiency of yeast snf4 mutant to grow on non-fermentable carbon source. This is Zinc finger protein AZF2 (AZF2) from Arabidopsis thaliana (Mouse-ear cress).